A 115-amino-acid chain; its full sequence is Large ribosomal subunit protein P2y (115 aa).

The interval 63–115 (ASVPSGGGGGVAVASATSGGGGGGGASAAESKKEEKKEEKEESDDDMGFSLFE) is disordered. Over residues 92-102 (ESKKEEKKEEK) the composition is skewed to basic and acidic residues. At Ser-105 the chain carries Phosphoserine.

This sequence belongs to the eukaryotic ribosomal protein P1/P2 family. P1 and P2 exist as dimers at the large ribosomal subunit. Phosphorylated.

Functionally, plays an important role in the elongation step of protein synthesis. This chain is Large ribosomal subunit protein P2y (RPP2B), found in Arabidopsis thaliana (Mouse-ear cress).